The following is a 450-amino-acid chain: MREIISIHIGQAGIQVGNACWELYCLEHGIEPDGTMPSDTTVGVAHDAFNTFFSETGAGKHVPRAIFVDLEPTVIDEVRTGSYRQLFHPEQLISGKEDAANNFARGHYTVGKEIVDLCLDRVRKLADNCTGLQGFLVFNAVGGGTGSGLGSLLLERLSVDYGKKSKLGFTIYPSPQVSTAVVEPYNSVLSTHSLLEHTDVAVLLDNEAIYDICRRSLDIERPTYTNLNRLISQIISSLTTSLRFDGAINVDVTEFQTNLVPYPRIHFMLSSYAPVISAEKAYHEQLSVPEITNAVFEPSSMMAKCDPRHGKYMACCLMYRGDVVPKDVNAAVATIKTKRTVQFVDWCPTGFKCGINYQPPSVVPGGDLAKVQRAVCMISNNTAVAEVFSRIDHKFDLMYAKRAFVHWYVGEGMEEGEFSEAREDLAALEKDYEEVGAEGADDENDDGEDY.

Residues Q11, E71, G144, T145, T179, N206, and N228 each coordinate GTP. Mg(2+) is bound at residue E71. Residue E254 is part of the active site.

It belongs to the tubulin family. Dimer of alpha and beta chains. A typical microtubule is a hollow water-filled tube with an outer diameter of 25 nm and an inner diameter of 15 nM. Alpha-beta heterodimers associate head-to-tail to form protofilaments running lengthwise along the microtubule wall with the beta-tubulin subunit facing the microtubule plus end conferring a structural polarity. Microtubules usually have 13 protofilaments but different protofilament numbers can be found in some organisms and specialized cells. Mg(2+) is required as a cofactor. In terms of processing, undergoes a tyrosination/detyrosination cycle, the cyclic removal and re-addition of a C-terminal tyrosine residue by the enzymes tubulin tyrosine carboxypeptidase (TTCP) and tubulin tyrosine ligase (TTL), respectively.

It localises to the cytoplasm. The protein resides in the cytoskeleton. It catalyses the reaction GTP + H2O = GDP + phosphate + H(+). Functionally, tubulin is the major constituent of microtubules, a cylinder consisting of laterally associated linear protofilaments composed of alpha- and beta-tubulin heterodimers. Microtubules grow by the addition of GTP-tubulin dimers to the microtubule end, where a stabilizing cap forms. Below the cap, tubulin dimers are in GDP-bound state, owing to GTPase activity of alpha-tubulin. In Oryza sativa subsp. japonica (Rice), this protein is Tubulin alpha-1 chain (TUBA1).